Reading from the N-terminus, the 302-residue chain is Putative peptide permease protein BMEII0861 (302 aa).

The segment at 1 to 22 (MRSSIHASRLRKMGQSIPASTG) is disordered. A run of 5 helical transmembrane segments spans residues 38 to 58 (IFGL…PLWL), 101 to 121 (LLVA…IGAI), 147 to 167 (IFLL…VVVI), 230 to 250 (ILLE…AASW), and 268 to 288 (WQWL…NFIG). The ABC transmembrane type-1 domain maps to 97-288 (GRISLLVAVS…LAVLAINFIG (192 aa)).

It belongs to the binding-protein-dependent transport system permease family. The complex is composed of two ATP-binding proteins (BMEII0863 and BMEII0864), two transmembrane proteins (BMEII0860 and BMEII0861) and a solute-binding protein (BMEII0859).

It is found in the cell inner membrane. Functionally, probably part of an ABC transporter complex that could be involved in peptide import. Probably responsible for the translocation of the substrate across the membrane. The chain is Putative peptide permease protein BMEII0861 from Brucella melitensis biotype 1 (strain ATCC 23456 / CCUG 17765 / NCTC 10094 / 16M).